A 657-amino-acid polypeptide reads, in one-letter code: tRNA 5-methylaminomethyl-2-thiouridine biosynthesis bifunctional protein MnmC (657 aa).

Residues 1–233 (MPRALEPAEP…KWQMTVASFR (233 aa)) form a tRNA (mnm(5)s(2)U34)-methyltransferase region. The FAD-dependent cmnm(5)s(2)U34 oxidoreductase stretch occupies residues 257–657 (IGAGLAGCAV…LRALRHGHTG (401 aa)).

In the N-terminal section; belongs to the methyltransferase superfamily. tRNA (mnm(5)s(2)U34)-methyltransferase family. This sequence in the C-terminal section; belongs to the DAO family. The cofactor is FAD.

It localises to the cytoplasm. The catalysed reaction is 5-aminomethyl-2-thiouridine(34) in tRNA + S-adenosyl-L-methionine = 5-methylaminomethyl-2-thiouridine(34) in tRNA + S-adenosyl-L-homocysteine + H(+). Its function is as follows. Catalyzes the last two steps in the biosynthesis of 5-methylaminomethyl-2-thiouridine (mnm(5)s(2)U) at the wobble position (U34) in tRNA. Catalyzes the FAD-dependent demodification of cmnm(5)s(2)U34 to nm(5)s(2)U34, followed by the transfer of a methyl group from S-adenosyl-L-methionine to nm(5)s(2)U34, to form mnm(5)s(2)U34. This chain is tRNA 5-methylaminomethyl-2-thiouridine biosynthesis bifunctional protein MnmC, found in Cupriavidus necator (strain ATCC 17699 / DSM 428 / KCTC 22496 / NCIMB 10442 / H16 / Stanier 337) (Ralstonia eutropha).